A 294-amino-acid polypeptide reads, in one-letter code: Pyridoxal 5'-phosphate synthase subunit PdxS (294 aa).

D24 contributes to the D-ribose 5-phosphate binding site. K81 (schiff-base intermediate with D-ribose 5-phosphate) is an active-site residue. G153 contributes to the D-ribose 5-phosphate binding site. R165 is a binding site for D-glyceraldehyde 3-phosphate. Residues G214 and 235–236 (GS) contribute to the D-ribose 5-phosphate site.

This sequence belongs to the PdxS/SNZ family. In terms of assembly, in the presence of PdxT, forms a dodecamer of heterodimers.

The enzyme catalyses aldehydo-D-ribose 5-phosphate + D-glyceraldehyde 3-phosphate + L-glutamine = pyridoxal 5'-phosphate + L-glutamate + phosphate + 3 H2O + H(+). The protein operates within cofactor biosynthesis; pyridoxal 5'-phosphate biosynthesis. Functionally, catalyzes the formation of pyridoxal 5'-phosphate from ribose 5-phosphate (RBP), glyceraldehyde 3-phosphate (G3P) and ammonia. The ammonia is provided by the PdxT subunit. Can also use ribulose 5-phosphate and dihydroxyacetone phosphate as substrates, resulting from enzyme-catalyzed isomerization of RBP and G3P, respectively. This Bacillus licheniformis (strain ATCC 14580 / DSM 13 / JCM 2505 / CCUG 7422 / NBRC 12200 / NCIMB 9375 / NCTC 10341 / NRRL NRS-1264 / Gibson 46) protein is Pyridoxal 5'-phosphate synthase subunit PdxS.